A 565-amino-acid chain; its full sequence is 2-isopropylmalate synthase (565 aa).

Residues 37-312 (PRWCSVDLRD…DPMIDLSDID (276 aa)) form the Pyruvate carboxyltransferase domain. The Mg(2+) site is built by aspartate 46, histidine 251, histidine 253, and asparagine 287. The segment at 446–565 (EGGDPAASLE…SAVNRASRES (120 aa)) is regulatory domain.

Belongs to the alpha-IPM synthase/homocitrate synthase family. LeuA type 2 subfamily. In terms of assembly, homodimer. Requires Mg(2+) as cofactor.

Its subcellular location is the cytoplasm. The enzyme catalyses 3-methyl-2-oxobutanoate + acetyl-CoA + H2O = (2S)-2-isopropylmalate + CoA + H(+). It functions in the pathway amino-acid biosynthesis; L-leucine biosynthesis; L-leucine from 3-methyl-2-oxobutanoate: step 1/4. In terms of biological role, catalyzes the condensation of the acetyl group of acetyl-CoA with 3-methyl-2-oxobutanoate (2-ketoisovalerate) to form 3-carboxy-3-hydroxy-4-methylpentanoate (2-isopropylmalate). This Parafrankia sp. (strain EAN1pec) protein is 2-isopropylmalate synthase.